The primary structure comprises 186 residues: Elongation factor P (186 aa).

It belongs to the elongation factor P family.

It localises to the cytoplasm. It functions in the pathway protein biosynthesis; polypeptide chain elongation. Involved in peptide bond synthesis. Stimulates efficient translation and peptide-bond synthesis on native or reconstituted 70S ribosomes in vitro. Probably functions indirectly by altering the affinity of the ribosome for aminoacyl-tRNA, thus increasing their reactivity as acceptors for peptidyl transferase. The sequence is that of Elongation factor P from Coprothermobacter proteolyticus (strain ATCC 35245 / DSM 5265 / OCM 4 / BT).